A 103-amino-acid chain; its full sequence is Large ribosomal subunit protein bL21 (103 aa).

Belongs to the bacterial ribosomal protein bL21 family. As to quaternary structure, part of the 50S ribosomal subunit. Contacts protein L20.

In terms of biological role, this protein binds to 23S rRNA in the presence of protein L20. The polypeptide is Large ribosomal subunit protein bL21 (Pseudoalteromonas atlantica (strain T6c / ATCC BAA-1087)).